Here is a 71-residue protein sequence, read N- to C-terminus: Brevinin-1SN2 (71 aa).

Positions 1-22 (MFTMKKSLLLIFFLGTINLSLC) are cleaved as a signal peptide. Residues 23-45 (EEERNADEDEKRDGDDESDVEVQ) constitute a propeptide, removed in mature form. The cysteines at positions 65 and 71 are disulfide-linked.

It belongs to the frog skin active peptide (FSAP) family. Brevinin subfamily. In terms of tissue distribution, expressed by the skin glands.

The protein localises to the secreted. Its function is as follows. Antimicrobial peptide. Active against a variety of Gram-negative and Gram-positive bacterial strains. Active against fungus C.glabrata 090902 and C.albicans ATCC 10231. Shows hemolytic activity against human erythrocytes. The chain is Brevinin-1SN2 from Sylvirana spinulosa (Fine-spined frog).